We begin with the raw amino-acid sequence, 397 residues long: Phosphoglycerate kinase (397 aa).

Residues 21–23, arginine 36, 59–62, arginine 119, and arginine 152 each bind substrate; these read DVN and HFGR. ATP contacts are provided by residues lysine 202, glutamate 324, and 354–357; that span reads GGDT.

Belongs to the phosphoglycerate kinase family. In terms of assembly, monomer.

The protein resides in the cytoplasm. It catalyses the reaction (2R)-3-phosphoglycerate + ATP = (2R)-3-phospho-glyceroyl phosphate + ADP. Its pathway is carbohydrate degradation; glycolysis; pyruvate from D-glyceraldehyde 3-phosphate: step 2/5. The polypeptide is Phosphoglycerate kinase (Cereibacter sphaeroides (strain ATCC 17029 / ATH 2.4.9) (Rhodobacter sphaeroides)).